Here is a 202-residue protein sequence, read N- to C-terminus: Holliday junction branch migration complex subunit RuvA (202 aa).

Positions 1 to 62 (MIGYLRGRLH…EDAMELYGFT (62 aa)) are domain I. Residues 63-141 (RPEELHLFTL…KSGLVDGTET (79 aa)) are domain II. A flexible linker region spans residues 141-145 (TEAIP). Positions 146-202 (AGGGDNDEALAALLALGYSREEIGPILARVRQELGNAAPTTAVLQAVLKTFGRGGGD) are domain III.

It belongs to the RuvA family. Homotetramer. Forms an RuvA(8)-RuvB(12)-Holliday junction (HJ) complex. HJ DNA is sandwiched between 2 RuvA tetramers; dsDNA enters through RuvA and exits via RuvB. An RuvB hexamer assembles on each DNA strand where it exits the tetramer. Each RuvB hexamer is contacted by two RuvA subunits (via domain III) on 2 adjacent RuvB subunits; this complex drives branch migration. In the full resolvosome a probable DNA-RuvA(4)-RuvB(12)-RuvC(2) complex forms which resolves the HJ.

It is found in the cytoplasm. In terms of biological role, the RuvA-RuvB-RuvC complex processes Holliday junction (HJ) DNA during genetic recombination and DNA repair, while the RuvA-RuvB complex plays an important role in the rescue of blocked DNA replication forks via replication fork reversal (RFR). RuvA specifically binds to HJ cruciform DNA, conferring on it an open structure. The RuvB hexamer acts as an ATP-dependent pump, pulling dsDNA into and through the RuvAB complex. HJ branch migration allows RuvC to scan DNA until it finds its consensus sequence, where it cleaves and resolves the cruciform DNA. In Moorella thermoacetica (strain ATCC 39073 / JCM 9320), this protein is Holliday junction branch migration complex subunit RuvA.